The chain runs to 424 residues: GTPase Obg (424 aa).

The Obg domain occupies 1–158 (MFIDTAKIFV…RWIKLELKLL (158 aa)). The 173-residue stretch at 159-331 (ADVGLIGFPN…LMKEAARLLS (173 aa)) folds into the OBG-type G domain. GTP contacts are provided by residues 165–172 (GFPNVGKS), 190–194 (FTTLK), 212–215 (DIPG), 282–285 (NKSD), and 312–314 (SAA). Residues S172 and T192 each coordinate Mg(2+). Residues 345–424 (RFIEEEKRFT…LNDFEFDFLL (80 aa)) form the OCT domain.

This sequence belongs to the TRAFAC class OBG-HflX-like GTPase superfamily. OBG GTPase family. In terms of assembly, monomer. Requires Mg(2+) as cofactor.

It is found in the cytoplasm. Its function is as follows. An essential GTPase which binds GTP, GDP and possibly (p)ppGpp with moderate affinity, with high nucleotide exchange rates and a fairly low GTP hydrolysis rate. Plays a role in control of the cell cycle, stress response, ribosome biogenesis and in those bacteria that undergo differentiation, in morphogenesis control. This chain is GTPase Obg, found in Clostridium botulinum (strain ATCC 19397 / Type A).